The sequence spans 247 residues: Pyridoxine 5'-phosphate synthase (247 aa).

Asn12 provides a ligand contact to 3-amino-2-oxopropyl phosphate. Asp14–His15 serves as a coordination point for 1-deoxy-D-xylulose 5-phosphate. Position 23 (Arg23) interacts with 3-amino-2-oxopropyl phosphate. His48 functions as the Proton acceptor in the catalytic mechanism. Positions 50 and 55 each coordinate 1-deoxy-D-xylulose 5-phosphate. Glu75 (proton acceptor) is an active-site residue. Thr105 is a 1-deoxy-D-xylulose 5-phosphate binding site. Residue His196 is the Proton donor of the active site. 3-amino-2-oxopropyl phosphate-binding positions include Gly197 and Gly218–His219.

Belongs to the PNP synthase family. Homooctamer; tetramer of dimers.

The protein resides in the cytoplasm. It catalyses the reaction 3-amino-2-oxopropyl phosphate + 1-deoxy-D-xylulose 5-phosphate = pyridoxine 5'-phosphate + phosphate + 2 H2O + H(+). It functions in the pathway cofactor biosynthesis; pyridoxine 5'-phosphate biosynthesis; pyridoxine 5'-phosphate from D-erythrose 4-phosphate: step 5/5. In terms of biological role, catalyzes the complicated ring closure reaction between the two acyclic compounds 1-deoxy-D-xylulose-5-phosphate (DXP) and 3-amino-2-oxopropyl phosphate (1-amino-acetone-3-phosphate or AAP) to form pyridoxine 5'-phosphate (PNP) and inorganic phosphate. This Pseudomonas fluorescens (strain SBW25) protein is Pyridoxine 5'-phosphate synthase.